The following is an 824-amino-acid chain: Mucosa-associated lymphoid tissue lymphoma translocation protein 1 (824 aa).

The segment at 1-27 (MSLLGDPLQALPPSAAPTGPLLAPPAG) is disordered. At Ser-2 the chain carries N-acetylserine. Low complexity predominate over residues 11 to 27 (LPPSAAPTGPLLAPPAG). In terms of domain architecture, Death spans 39–126 (RRLSELLDQA…EVLQLLSPPG (88 aa)). 2 consecutive Ig-like C2-type domains span residues 125–201 (PGIK…FEFS) and 212–305 (PESF…KKVE). Ser-135 is modified (phosphoserine). Cystine bridges form between Cys-147/Cys-190 and Cys-248/Cys-290. Positions 348-562 (IGNMNYREHP…SLSEKRALTD (215 aa)) are caspase-like. Positions 369-376 (LTNLLRQL) match the Nuclear export signal motif. Catalysis depends on residues His-415 and Cys-464.

Belongs to the peptidase C14B family. Homooligomer; forms oligomers which bind to TRAF6. Forms a complex with CARD14 and MALT1; resulting in the formation of a CBM (CARD14-BCL10-MALT1) complex. Forms a complex with CARD11 and MALT1; resulting in the formation of a CBM (CARD11-BCL10-MALT1) complex. Forms a complex with CARD9 and MALT1; resulting in the formation of a CBM (CARD9-BCL10-MALT1) complex. In terms of tissue distribution, highly expressed in peripheral blood mononuclear cells. Detected at lower levels in bone marrow, thymus and lymph node, and at very low levels in colon and lung.

It localises to the cytoplasm. The protein resides in the perinuclear region. It is found in the nucleus. Protease that enhances BCL10-induced activation: acts via formation of CBM complexes that channel adaptive and innate immune signaling downstream of CARD domain-containing proteins (CARD9, CARD11 and CARD14) to activate NF-kappa-B and MAP kinase p38 pathways which stimulate expression of genes encoding pro-inflammatory cytokines and chemokines. Mediates BCL10 cleavage: MALT1-dependent BCL10 cleavage plays an important role in T-cell antigen receptor-induced integrin adhesion. Involved in the induction of T helper 17 cells (Th17) differentiation. Cleaves RC3H1 and ZC3H12A in response to T-cell receptor (TCR) stimulation which releases their cooperatively repressed targets to promote Th17 cell differentiation. Also mediates cleavage of N4BP1 in T-cells following TCR-mediated activation, leading to N4BP1 inactivation. May also have ubiquitin ligase activity: binds to TRAF6, inducing TRAF6 oligomerization and activation of its ligase activity. This Homo sapiens (Human) protein is Mucosa-associated lymphoid tissue lymphoma translocation protein 1.